A 514-amino-acid polypeptide reads, in one-letter code: Na(+)/H(+) antiporter NhaB (514 aa).

12 consecutive transmembrane segments (helical) span residues 23–43, 52–72, 97–117, 120–140, 144–164, 202–222, 238–258, 303–323, 353–373, 391–411, 447–467, and 475–495; these read LALLIFLIINPLIFLVNPFIA, IFTLAMALKCYPLLPGGLLAI, LLLMFMVAGIYFMKQLLLFIF, LLLSIRSKALLSLSFCLAAAF, FLDALTVVAVVISVAVGFYGI, LMMHAGVGTALGGVMTMVGEP, FFLRMSPITVPVLVCGLLTCL, ALIGIWLVIALALHLAEVGLI, FTALLTVFFSIVAVIIDQSLF, LFYLFNGLLSSISDNVFVGTI, ATPNGQAAFLFLLTSALAPLI, and VWMALPYTIVLTCVGLLCVEF.

Belongs to the NhaB Na(+)/H(+) (TC 2.A.34) antiporter family.

Its subcellular location is the cell inner membrane. The catalysed reaction is 2 Na(+)(in) + 3 H(+)(out) = 2 Na(+)(out) + 3 H(+)(in). Functionally, na(+)/H(+) antiporter that extrudes sodium in exchange for external protons. The sequence is that of Na(+)/H(+) antiporter NhaB from Escherichia fergusonii (strain ATCC 35469 / DSM 13698 / CCUG 18766 / IAM 14443 / JCM 21226 / LMG 7866 / NBRC 102419 / NCTC 12128 / CDC 0568-73).